The sequence spans 182 residues: Photosystem I assembly protein Ycf4 (182 aa).

2 consecutive transmembrane segments (helical) span residues 22–42 and 66–86; these read WAII…SSYL and FYGI…LFSV.

Belongs to the Ycf4 family.

It is found in the plastid. Its subcellular location is the chloroplast thylakoid membrane. Its function is as follows. Seems to be required for the assembly of the photosystem I complex. The protein is Photosystem I assembly protein Ycf4 of Tupiella akineta (Green alga).